Reading from the N-terminus, the 715-residue chain is ATP-dependent DNA helicase Hel308 (715 aa).

A Q motif motif is present at residues 8-36; the sequence is MPIEDLKLPSNVIEIIKKRGIKKLNPPQT. ATP is bound by residues Gln35 and 53–60; that span reads SPTGSGKT. The Helicase ATP-binding domain occupies 40-203; it reads KKGLLEGNRL…WLGAEPVATN (164 aa). The short motif at 152-155 is the DEAH box element; it reads DELH. A Helicase C-terminal domain is found at 236 to 442; sequence HGDDAIIAYT…ERAFYTFLLG (207 aa).

This sequence belongs to the helicase family. Hel308 subfamily. Monomer.

The catalysed reaction is Couples ATP hydrolysis with the unwinding of duplex DNA by translocating in the 3'-5' direction.. The enzyme catalyses ATP + H2O = ADP + phosphate + H(+). Its function is as follows. DNA-dependent ATPase and 3'-5' DNA helicase that may be involved in repair of stalled replication forks. A low processivity 3'-5' helicase. Unwinds short dsDNA substrates with 3'-overhangs (25 bp dsDNA with 25 base overhang), less active on longer dsDNA substrates. Also unwinds the lagging strand of a stalled replication fork (but the leading strand was not tested). Binds ssDNA, but dsDNA about 35-fold less well. Able to displace streptavidin from biotinylated ssDNA, which is partially inhibited by DNA-binding proteins, suggesting it may play a role in stripping proteins from stalled replication forks. The sequence is that of ATP-dependent DNA helicase Hel308 from Saccharolobus solfataricus (strain 98/2) (Sulfolobus solfataricus).